A 197-amino-acid polypeptide reads, in one-letter code: Pinin homolog 1 (197 aa).

Positions 30-73 are disordered; that stretch reads LDGKVNNEDSHMEIDQPEGSMEEDDHRQVKEKNTSENSVEQKRG. Basic and acidic residues-rich tracts occupy residues 34–43 and 53–71; these read VNNEDSHMEI and DDHR…VEQK.

The protein belongs to the pinin family.

Its subcellular location is the nucleus. The protein localises to the cytoplasm. Its function is as follows. Transcriptional activator that may participate in the regulation of mRNA splicing. The protein is Pinin homolog 1 (pnn1) of Schizosaccharomyces pombe (strain 972 / ATCC 24843) (Fission yeast).